Reading from the N-terminus, the 138-residue chain is Cellular retinoic acid-binding protein 2 (138 aa).

The Nuclear localization signal motif lies at 21–31 (KALGVNMMMRK). Lys102 is covalently cross-linked (Glycyl lysine isopeptide (Lys-Gly) (interchain with G-Cter in SUMO)). An all-trans-retinoate-binding site is contributed by 133-135 (RVY).

Belongs to the calycin superfamily. Fatty-acid binding protein (FABP) family. As to quaternary structure, interacts with importin alpha. Interacts with RXR and RARA. In terms of processing, sumoylated in response to retinoic acid binding, sumoylation is critical for dissociation from ER and subsequent nuclear translocation. As to expression, embryo and skin of adult mouse.

The protein resides in the cytoplasm. Its subcellular location is the endoplasmic reticulum. It localises to the nucleus. Transports retinoic acid to the nucleus. Regulates the access of retinoic acid to the nuclear retinoic acid receptors. The polypeptide is Cellular retinoic acid-binding protein 2 (Crabp2) (Mus musculus (Mouse)).